The primary structure comprises 807 residues: MRYEFSKTEAKWQAWWKEQNTFKTGDDADKPKYYVLDMFPYPSGTGLHVGHLEGYTASDITARYKRSCGYNVLHPMGWDAFGLPAEQFAIKTGTHPKTTTEENIRNFKGTLQAMGFSYDWSREINTTDPHYFKWTQWIFLKLYERGLAYMSEVDVNWCEELKTVLANEEVDEKIADGYTVVRRPLRQWVLKITAYADRLLADLDELNWPENVKQMQRNWIGRSEGVEIDFELRCHNKKLRVYTTRPDTLFGATYLVISPEHPLAEKLATAQQLVEVKNYISKAKLKTELERTGLQKEKTGVFTGSYAINPATGEPLPVWISDFVLISYGTGAIMSVPAHDSRDWEFAKQYNLPIIEVIQSPHDVQERVFEEKESICVNSANNEITLNGLPFCEAFERMASWLETKKAGERKVNYKLRDWIFSRQRYWGEPIPIKHYHDGTLRLETALPLVLPEVEAYHPSSTGESPLANIPHWLYGSDEHGSFRRETNTMPQWAGSCWYYLRFIDPENQEKLVDPEKERYWMNVDLYIGGAEHAVLHLLYARFWHKVLFDLGVVSSREPFKKLFNQGMILGEDNEKMSKSRGNVIPADHVLERYGADAVRLYEMFLGPLEQVKPWNTNGIEGISRFLSKVWRLVYGEHEESATLLSEEAMPEELLRRMHKSIKKVGEDTEQLKFNTAISEMMVFVNELQKSGCKNRSAIETLLVLLSPYAPHITEELWESIGHNYSISQAPFPSFDPKLVEESILTIAVQINGKLRGTFLAPAKSPKELLLQEAKKTESVFKFLDGQTILREIVVVDKLVNFVVKKE.

Residues 40-51 carry the 'HIGH' region motif; sequence PYPSGTGLHVGH. A 'KMSKS' region motif is present at residues 576–580; that stretch reads KMSKS. Residue K579 coordinates ATP.

Belongs to the class-I aminoacyl-tRNA synthetase family.

Its subcellular location is the cytoplasm. The enzyme catalyses tRNA(Leu) + L-leucine + ATP = L-leucyl-tRNA(Leu) + AMP + diphosphate. This is Leucine--tRNA ligase from Pelodictyon phaeoclathratiforme (strain DSM 5477 / BU-1).